The primary structure comprises 818 residues: Serine/threonine-protein phosphatase 4 regulatory subunit 3 (818 aa).

A WH1 domain is found at 1 to 100 (MTDTRRRVKV…DEIWEKICQV (100 aa)). Positions 718–818 (LAKSSFSGRQ…PPSKKSRLSS (101 aa)) are disordered. Over residues 721 to 730 (SSFSGRQNPS) the composition is skewed to polar residues. Positions 736–756 (SGSTKTSLSSPPPSASLSPGS) are enriched in low complexity. Positions 788-804 (YPDDDEEEEDDDDEESK) are enriched in acidic residues.

This sequence belongs to the SMEK family. In terms of assembly, serine/threonine-protein phosphatase 4 (PP4) occurs in different assemblies of the catalytic and one or more regulatory subunits.

Its function is as follows. Regulatory subunit of serine/threonine-protein phosphatase 4. The chain is Serine/threonine-protein phosphatase 4 regulatory subunit 3 (smek1) from Tetraodon nigroviridis (Spotted green pufferfish).